A 340-amino-acid polypeptide reads, in one-letter code: Mitochondrial import receptor subunit TOM40 homolog 2 (340 aa).

Residues 1-37 (MGNVMASTADAESSRGRGHLSAGLRLPEAPQYSGGVP) are disordered.

It belongs to the Tom40 family. Forms part of the preprotein translocase of the outer mitochondrial membrane (TOM complex). Interacts with mitochondrial targeting sequences. As to expression, only expressed in the male germline, detected in primary spermatocytes as well as post-meiotic stages. Not detected in stem cells and spermatogonia near the tip of the testis.

The protein localises to the mitochondrion outer membrane. Functionally, channel-forming protein essential for import of protein precursors into mitochondria. This is Mitochondrial import receptor subunit TOM40 homolog 2 from Drosophila melanogaster (Fruit fly).